Consider the following 1192-residue polypeptide: Reticulon-4 (1192 aa).

An N-acetylmethionine modification is found at M1. The interval 1–204 (MEDLDQSPLV…ASEPVIRSSA (204 aa)) is disordered. Topologically, residues 1–1018 (MEDLDQSPLV…LYWRDIKKTG (1018 aa)) are cytoplasmic. 2 positions are modified to phosphoserine: S7 and S15. A compositionally biased stretch (acidic residues) spans 31–53 (PEDEEEEEEEEEEDEDEDLEELE). Residues 65–77 (AAPVPTAPAAGAP) are compositionally biased toward low complexity. A compositionally biased stretch (pro residues) spans 87–101 (PPAPRGPLPAAPPVA). Position 107 is a phosphoserine (S107). Positions 110-132 (PSPVSSTVPAPSPLSAAAVSPSK) are enriched in low complexity. Over residues 141 to 150 (ARPPPPPPAS) the composition is skewed to pro residues. Residue S152 is modified to Phosphoserine. Pro residues predominate over residues 159–173 (WTPPAPAPAAPPSTP). S181, S182, S184, S361, and S446 each carry phosphoserine. The segment at 427–458 (DSLEQTNHEKDSESSNDDTSFPSTPEGIKDRS) is disordered. T450 carries the phosphothreonine modification. Residue S511 is modified to Phosphoserine. Positions 722–734 (AKVEQPVPDHSEL) are enriched in basic and acidic residues. The segment at 722-762 (AKVEQPVPDHSELVEDSSPDSEPVDLFSDDSIPDVPQKQDE) is disordered. Over residues 735–753 (VEDSSPDSEPVDLFSDDSI) the composition is skewed to acidic residues. S749 is modified (phosphoserine). A Phosphothreonine modification is found at T858. Phosphoserine occurs at positions 881 and 991. The 188-residue stretch at 1005–1192 (VVDLLYWRDI…KIPGLKRKAE (188 aa)) folds into the Reticulon domain. The helical transmembrane segment at 1019 to 1039 (VVFGASLFLLLSLTVFSIVSV) threads the bilayer. Over 1040–1133 (TAYIALALLS…LMWVFTYVGA (94 aa)) the chain is Lumenal. Residue K1104 is modified to N6-acetyllysine. A helical transmembrane segment spans residues 1134-1154 (LFNGLTLLILALISLFSVPVI). Residues 1155-1192 (YERHQAQIDHYLGLANKNVKDAMAKIQAKIPGLKRKAE) are Cytoplasmic-facing.

As to quaternary structure, binds to RTN4R. Interacts with ATL1. Interacts with TMEM170A. Interacts with RTN4IP1. In terms of assembly, interacts in trans with CNTNAP1. Interacts with REEP5. Interacts with synaptic plasticity regulator PANTS; the interaction results in enhanced RTN4-mediated inhibition of AMPA receptor clustering. Interacts with GPR50. Homodimer. Interacts with BAD/Bcl-xl and BCL2. Interact with RTN3. Interacts with NGBR. Interacts with SPTLC1. Interacts with GRAMD4. Interacts with CDH5. Interacts with BACE1 and BACE2. Interacts with REEP5. Interacts with RETREG3. As to quaternary structure, interacts with BACE1 and BACE2. Interacts with TMEM33. In terms of tissue distribution, isoform A: is specifically expressed in brain and testis and weakly in heart and skeletal muscle. Isoform B: widely expressed except for the liver. Highly expressed in endothelial cells and vascular smooth muscle cells, including blood vessels and mesenteric arteries. Isoform C: is expressed in brain, skeletal muscle and adipocytes. Isoform D is testis-specific.

The protein localises to the endoplasmic reticulum membrane. It localises to the cell membrane. The protein resides in the synapse. Its subcellular location is the cell junction. Its function is as follows. Required to induce the formation and stabilization of endoplasmic reticulum (ER) tubules. They regulate membrane morphogenesis in the ER by promoting tubular ER production. They influence nuclear envelope expansion, nuclear pore complex formation and proper localization of inner nuclear membrane proteins. However each isoform have specific functions mainly depending on their tissue expression specificities. Developmental neurite growth regulatory factor with a role as a negative regulator of axon-axon adhesion and growth, and as a facilitator of neurite branching. Regulates neurite fasciculation, branching and extension in the developing nervous system. Involved in down-regulation of growth, stabilization of wiring and restriction of plasticity in the adult CNS. Regulates the radial migration of cortical neurons via an RTN4R-LINGO1 containing receptor complex. Acts as a negative regulator of central nervous system angiogenesis. Inhibits spreading, migration and sprouting of primary brain microvascular endothelial cells (MVECs). Also induces the retraction of MVECs lamellipodia and filopodia in a ROCK pathway-dependent manner. Functionally, mainly function in endothelial cells and vascular smooth muscle cells, is also involved in immune system regulation. Modulator of vascular remodeling, promotes the migration of endothelial cells but inhibits the migration of vascular smooth muscle cells. Regulates endothelial sphingolipid biosynthesis with direct effects on vascular function and blood pressure. Inhibits serine palmitoyltransferase, SPTLC1, the rate-limiting enzyme of the novo sphingolipid biosynthetic pathway, thereby controlling production of endothelial sphingosine-1-phosphate (S1P). Required to promote macrophage homing and functions such as cytokine/chemokine gene expression involved in angiogenesis, arteriogenesis and tissue repair. Mediates ICAM1 induced transendothelial migration of leukocytes such as monocytes and neutrophils and acute inflammation. Necessary for immune responses triggered by nucleic acid sensing TLRs, such as TLR9, is required for proper TLR9 location to endolysosomes. Also involved in immune response to LPS. Plays a role in liver regeneration through the modulation of hepatocytes proliferation. Reduces the anti-apoptotic activity of Bcl-xl and Bcl-2. This is likely consecutive to their change in subcellular location, from the mitochondria to the endoplasmic reticulum, after binding and sequestration. With isoform C, inhibits BACE1 activity and amyloid precursor protein processing. In terms of biological role, regulates cardiomyocyte apoptosis upon hypoxic conditions. With isoform B, inhibits BACE1 activity and amyloid precursor protein processing. The sequence is that of Reticulon-4 from Homo sapiens (Human).